The sequence spans 305 residues: Glycerol-3-phosphate dehydrogenase [NAD(P)+] (305 aa).

The NADPH site is built by Trp11, Arg31, and Lys79. The sn-glycerol 3-phosphate site is built by Lys79 and Gly107. Ala111 contacts NADPH. Residues Lys162, Asp215, Ser225, Arg226, and Asn227 each coordinate sn-glycerol 3-phosphate. Lys162 (proton acceptor) is an active-site residue. Arg226 contacts NADPH. Residue Glu252 coordinates NADPH.

Belongs to the NAD-dependent glycerol-3-phosphate dehydrogenase family.

The protein resides in the cytoplasm. The enzyme catalyses sn-glycerol 3-phosphate + NAD(+) = dihydroxyacetone phosphate + NADH + H(+). It carries out the reaction sn-glycerol 3-phosphate + NADP(+) = dihydroxyacetone phosphate + NADPH + H(+). It functions in the pathway membrane lipid metabolism; glycerophospholipid metabolism. Functionally, catalyzes the reduction of the glycolytic intermediate dihydroxyacetone phosphate (DHAP) to sn-glycerol 3-phosphate (G3P), the key precursor for phospholipid synthesis. This Gloeobacter violaceus (strain ATCC 29082 / PCC 7421) protein is Glycerol-3-phosphate dehydrogenase [NAD(P)+].